The following is a 346-amino-acid chain: 4-hydroxy-2-oxovalerate aldolase (346 aa).

The region spanning 8 to 260 is the Pyruvate carboxyltransferase domain; sequence VILHDMSLRD…ETGIDLYKIM (253 aa). 16-17 lines the substrate pocket; sequence RD. Residue D17 participates in Mn(2+) binding. H20 functions as the Proton acceptor in the catalytic mechanism. Residues S170 and H199 each coordinate substrate. Residues H199 and H201 each coordinate Mn(2+). Residue Y290 participates in substrate binding.

This sequence belongs to the 4-hydroxy-2-oxovalerate aldolase family.

The enzyme catalyses (S)-4-hydroxy-2-oxopentanoate = acetaldehyde + pyruvate. The protein operates within aromatic compound metabolism; naphthalene degradation. This Pseudomonas putida (Arthrobacter siderocapsulatus) protein is 4-hydroxy-2-oxovalerate aldolase (nahM).